A 680-amino-acid polypeptide reads, in one-letter code: Zinc finger protein OBI1 (680 aa).

One can recognise a KRAB domain in the interval Val16–Gly87. The C2H2-type 1; degenerate zinc finger occupies Cys263–His280. 8 consecutive C2H2-type zinc fingers follow at residues Phe455–His477, His483–His505, Tyr511–His533, Phe539–His561, His567–His589, Tyr595–His617, Tyr623–His645, and Phe651–His673.

Polyubiquitinated, leading to its degradation via the ubiquitin-proteasome pathway. Expressed during osteogenic differentiation where levels increase from the first days of differentiation and remain high during the whole process. Highly expressed in lung.

It is found in the nucleus. May modulate osteogenic differentiation, at least in part, through the bone morphogenetic protein (BMP) signaling pathway, increasing RUNX2 activation and leading to osteoblast commitment and maturation. This Mus musculus (Mouse) protein is Zinc finger protein OBI1 (ObI1).